A 447-amino-acid chain; its full sequence is Exodeoxyribonuclease 7 large subunit (447 aa).

It belongs to the XseA family. As to quaternary structure, heterooligomer composed of large and small subunits.

It is found in the cytoplasm. It catalyses the reaction Exonucleolytic cleavage in either 5'- to 3'- or 3'- to 5'-direction to yield nucleoside 5'-phosphates.. Bidirectionally degrades single-stranded DNA into large acid-insoluble oligonucleotides, which are then degraded further into small acid-soluble oligonucleotides. This chain is Exodeoxyribonuclease 7 large subunit, found in Exiguobacterium sibiricum (strain DSM 17290 / CCUG 55495 / CIP 109462 / JCM 13490 / 255-15).